A 284-amino-acid chain; its full sequence is MSQNEPNPLVIFSTLAAIILAAVAVYVVKLNKKNGPVLKPDVFQKFPLIEKTRLSHNTCIYRFGLPKSTDRLGLPIGQHISIGATINGKEVVRSYTPISRDDELGYFDLLIKTYEQGNISRHVDSKSVGDHIEVRGPKGFFTYTPNMVEHLGMIAGGTGIAPMYQVLTAILTNPDDKTKISLVYANVTEEDILLRAELDLFAKEHPDRFKVHYVLNNAPENWNGSVGFVTPEIMEKHLPNKDQDGYLLLCGPPPMISAMKKNAVTLGYPKARPVSKLGDKVFVF.

The chain crosses the membrane as a helical span at residues 8–28 (PLVIFSTLAAIILAAVAVYVV). The region spanning 41–144 (DVFQKFPLIE…RGPKGFFTYT (104 aa)) is the FAD-binding FR-type domain. FAD-binding positions include 124–139 (DSKS…GPKG) and 150–182 (HLGM…KISL).

It belongs to the flavoprotein pyridine nucleotide cytochrome reductase family. Monomer. Component of the 2-(3-amino-3-carboxypropyl)histidine synthase complex composed of DPH1, DPH2, DPH3 and a NADH-dependent reductase, predominantly CBR1. The cofactor is FAD.

It is found in the mitochondrion outer membrane. It carries out the reaction 2 Fe(III)-[cytochrome b5] + NADH = 2 Fe(II)-[cytochrome b5] + NAD(+) + H(+). It catalyses the reaction 2 Fe(3+)-[Dph3] + NADH = 2 Fe(2+)-[Dph3] + NAD(+) + H(+). It functions in the pathway protein modification; peptidyl-diphthamide biosynthesis. Its function is as follows. NADH-dependent reductase for DPH3 and cytochrome b5. Required for the first step of diphthamide biosynthesis, a post-translational modification of histidine which occurs in elongation factor 2. DPH1 and DPH2 transfer a 3-amino-3-carboxypropyl (ACP) group from S-adenosyl-L-methionine (SAM) to a histidine residue, the reaction is assisted by a reduction system comprising DPH3 and a NADH-dependent reductase, predominantly CBR1. By reducing DPH3, also involved in the formation of the tRNA wobble base modification mcm5s 2U (5-methoxycarbonylmethyl-2-thiouridine), mediated by the elongator complex. The cytochrome b5/NADH cytochrome b5 reductase electron transfer system supports the catalytic activity of several sterol biosynthetic enzymes. In Meyerozyma guilliermondii (strain ATCC 6260 / CBS 566 / DSM 6381 / JCM 1539 / NBRC 10279 / NRRL Y-324) (Yeast), this protein is NADH-cytochrome b5 reductase 1 (CBR1).